Reading from the N-terminus, the 341-residue chain is S-adenosylmethionine:tRNA ribosyltransferase-isomerase (341 aa).

This sequence belongs to the QueA family. In terms of assembly, monomer.

The protein resides in the cytoplasm. The enzyme catalyses 7-aminomethyl-7-carbaguanosine(34) in tRNA + S-adenosyl-L-methionine = epoxyqueuosine(34) in tRNA + adenine + L-methionine + 2 H(+). The protein operates within tRNA modification; tRNA-queuosine biosynthesis. Functionally, transfers and isomerizes the ribose moiety from AdoMet to the 7-aminomethyl group of 7-deazaguanine (preQ1-tRNA) to give epoxyqueuosine (oQ-tRNA). The chain is S-adenosylmethionine:tRNA ribosyltransferase-isomerase from Pelotomaculum thermopropionicum (strain DSM 13744 / JCM 10971 / SI).